The chain runs to 245 residues: 4-hydroxy-tetrahydrodipicolinate reductase (245 aa).

Residues 7–12, 75–77, and 102–105 contribute to the NAD(+) site; these read GAKGKV, GTT, and APNF. Histidine 132 (proton donor/acceptor) is an active-site residue. Histidine 133 serves as a coordination point for (S)-2,3,4,5-tetrahydrodipicolinate. Catalysis depends on lysine 136, which acts as the Proton donor. 142 to 143 contacts (S)-2,3,4,5-tetrahydrodipicolinate; that stretch reads GT.

Belongs to the DapB family.

The protein localises to the cytoplasm. It catalyses the reaction (S)-2,3,4,5-tetrahydrodipicolinate + NAD(+) + H2O = (2S,4S)-4-hydroxy-2,3,4,5-tetrahydrodipicolinate + NADH + H(+). The catalysed reaction is (S)-2,3,4,5-tetrahydrodipicolinate + NADP(+) + H2O = (2S,4S)-4-hydroxy-2,3,4,5-tetrahydrodipicolinate + NADPH + H(+). The protein operates within amino-acid biosynthesis; L-lysine biosynthesis via DAP pathway; (S)-tetrahydrodipicolinate from L-aspartate: step 4/4. In terms of biological role, catalyzes the conversion of 4-hydroxy-tetrahydrodipicolinate (HTPA) to tetrahydrodipicolinate. This chain is 4-hydroxy-tetrahydrodipicolinate reductase, found in Mycolicibacterium gilvum (strain PYR-GCK) (Mycobacterium gilvum (strain PYR-GCK)).